Consider the following 257-residue polypeptide: MSTLITLKNVAVNFGDRRVLNNISLHLQRGNILTLLGPNGAGKSTLVRVVLGLIEPSSGTIEQTDGLKIGYVPQKLHLDPTLPLTVKRFMMLKPGVKSGDILPALERVNAAHLLQQPMQKLSGGESQRVLLARALLNQPQLLVLDEPTQGVDVNGQLALYDLINQIRTELHCAVLMVSHDLHLVMAKTDEVLCLNQHICCSGTPEVVSTHPEFIAMFGHHGAEQLAIYRHQHDHHQHNHHHDLKGKIILENNRECHS.

The ABC transporter domain maps to 5–220; the sequence is ITLKNVAVNF…PEFIAMFGHH (216 aa). 37–44 lines the ATP pocket; sequence GPNGAGKS.

Belongs to the ABC transporter superfamily. Zinc importer (TC 3.A.1.15.5) family. The complex is composed of two ATP-binding proteins (ZnuC), two transmembrane proteins (ZnuB) and a solute-binding protein (ZnuA).

Its subcellular location is the cell inner membrane. The catalysed reaction is Zn(2+)(out) + ATP(in) + H2O(in) = Zn(2+)(in) + ADP(in) + phosphate(in) + H(+)(in). Part of the ABC transporter complex ZnuABC involved in zinc import. Responsible for energy coupling to the transport system. In Photorhabdus laumondii subsp. laumondii (strain DSM 15139 / CIP 105565 / TT01) (Photorhabdus luminescens subsp. laumondii), this protein is Zinc import ATP-binding protein ZnuC.